Reading from the N-terminus, the 411-residue chain is Protein translocase subunit SecY (411 aa).

10 consecutive transmembrane segments (helical) span residues 11–31 (IIFTLFLLVLARLGIFIPVPG), 52–72 (IFSGGGFSTIGIFALGIVPYI), 111–131 (ALGWATLQSGAISIWVKPYVF), 135–155 (FAFVCESVLALTAGSMIIMWL), 163–180 (GIGNGASLLIFQNIVSGL), 197–217 (SLKFGLFIAIFLLMIIITICV), 253–273 (VMPIVFASASMALPSYLTQII), 291–311 (LYLLLYCALILFFSYFYTSIV), 349–369 (TFLGASFLFTVALIPFIIEKV), and 377–397 (GLGATSLLILVGVAIDTAKQI).

It belongs to the SecY/SEC61-alpha family. In terms of assembly, component of the plastid Sec protein translocase complex, which is composed of at least SecY, SecE and SecG.

The protein localises to the plastid. It is found in the chloroplast thylakoid membrane. The central subunit of the protein translocation channel SecYE. Consists of two halves formed by TMs 1-5 and 6-10. These two domains form a lateral gate at the front which open onto the bilayer between TMs 2 and 7, and are clamped together by SecE at the back. The channel is closed by both a pore ring composed of hydrophobic SecY resides and a short helix (helix 2A) on the extracellular side of the membrane which forms a plug. The sequence is that of Protein translocase subunit SecY from Pyropia yezoensis (Susabi-nori).